The following is a 1407-amino-acid chain: DNA-directed RNA polymerase subunit beta' (1407 aa).

C70, C72, C85, and C88 together coordinate Zn(2+). Mg(2+) is bound by residues D460, D462, and D464. Positions 814, 888, 895, and 898 each coordinate Zn(2+).

It belongs to the RNA polymerase beta' chain family. The RNAP catalytic core consists of 2 alpha, 1 beta, 1 beta' and 1 omega subunit. When a sigma factor is associated with the core the holoenzyme is formed, which can initiate transcription. Mg(2+) is required as a cofactor. Zn(2+) serves as cofactor.

It carries out the reaction RNA(n) + a ribonucleoside 5'-triphosphate = RNA(n+1) + diphosphate. Its function is as follows. DNA-dependent RNA polymerase catalyzes the transcription of DNA into RNA using the four ribonucleoside triphosphates as substrates. The chain is DNA-directed RNA polymerase subunit beta' from Salmonella arizonae (strain ATCC BAA-731 / CDC346-86 / RSK2980).